The following is a 63-amino-acid chain: Large ribosomal subunit protein uL29 (63 aa).

It belongs to the universal ribosomal protein uL29 family.

This Christiangramia forsetii (strain DSM 17595 / CGMCC 1.15422 / KT0803) (Gramella forsetii) protein is Large ribosomal subunit protein uL29.